A 317-amino-acid chain; its full sequence is Annexin A13 (317 aa).

Glycine 2 carries the N-myristoyl glycine lipid modification. 4 Annexin repeats span residues 15–86 (FDAD…ALLD), 87–158 (RPNE…SLLQ), 170–242 (ELAG…TIVR), and 246–317 (DLEG…ALLH).

The protein belongs to the annexin family. In terms of assembly, monomer and homodimer. As to expression, detected on the tips of microvilli in small intestine (at protein level).

Its subcellular location is the apical cell membrane. The protein localises to the cell membrane. The protein resides in the cytoplasmic vesicle. Binds to membranes enriched in phosphatidylserine or phosphatidylglycerol in a calcium-dependent manner. Half-maximal membrane binding requires about 60 uM calcium. Does not bind to membranes that lack phospholipids with an acidic headgroup. This Mus musculus (Mouse) protein is Annexin A13 (Anxa13).